The chain runs to 158 residues: ABA-responsive protein ABR18 (158 aa).

Belongs to the BetVI family.

This Pisum sativum (Garden pea) protein is ABA-responsive protein ABR18.